The following is a 305-amino-acid chain: Methionyl-tRNA formyltransferase (305 aa).

108 to 111 is a (6S)-5,6,7,8-tetrahydrofolate binding site; it reads SLLP.

Belongs to the Fmt family.

The catalysed reaction is L-methionyl-tRNA(fMet) + (6R)-10-formyltetrahydrofolate = N-formyl-L-methionyl-tRNA(fMet) + (6S)-5,6,7,8-tetrahydrofolate + H(+). Attaches a formyl group to the free amino group of methionyl-tRNA(fMet). The formyl group appears to play a dual role in the initiator identity of N-formylmethionyl-tRNA by promoting its recognition by IF2 and preventing the misappropriation of this tRNA by the elongation apparatus. The polypeptide is Methionyl-tRNA formyltransferase (Clavibacter sepedonicus (Clavibacter michiganensis subsp. sepedonicus)).